The primary structure comprises 363 residues: Probable dual-specificity RNA methyltransferase RlmN (363 aa).

Residue Glu106 is the Proton acceptor of the active site. Residues 112–345 form the Radical SAM core domain; it reads HEYGNSVCVT…VTIRREQGHD (234 aa). Cysteines 119 and 350 form a disulfide. The [4Fe-4S] cluster site is built by Cys126, Cys130, and Cys133. Residues 176–177, Ser208, 231–233, and Asn307 contribute to the S-adenosyl-L-methionine site; these read GE and SLH. Cys350 functions as the S-methylcysteine intermediate in the catalytic mechanism.

Belongs to the radical SAM superfamily. RlmN family. [4Fe-4S] cluster is required as a cofactor.

The protein resides in the cytoplasm. It catalyses the reaction adenosine(2503) in 23S rRNA + 2 reduced [2Fe-2S]-[ferredoxin] + 2 S-adenosyl-L-methionine = 2-methyladenosine(2503) in 23S rRNA + 5'-deoxyadenosine + L-methionine + 2 oxidized [2Fe-2S]-[ferredoxin] + S-adenosyl-L-homocysteine. The catalysed reaction is adenosine(37) in tRNA + 2 reduced [2Fe-2S]-[ferredoxin] + 2 S-adenosyl-L-methionine = 2-methyladenosine(37) in tRNA + 5'-deoxyadenosine + L-methionine + 2 oxidized [2Fe-2S]-[ferredoxin] + S-adenosyl-L-homocysteine. Functionally, specifically methylates position 2 of adenine 2503 in 23S rRNA and position 2 of adenine 37 in tRNAs. This chain is Probable dual-specificity RNA methyltransferase RlmN, found in Bacillus subtilis (strain 168).